Reading from the N-terminus, the 122-residue chain is uncharacterized protein (122 aa).

Disordered regions lie at residues 1–30 and 96–122; these read MGRE…DQPE and FKSC…DAMG.

This is an uncharacterized protein from Homo sapiens (Human).